Reading from the N-terminus, the 203-residue chain is CASP-like protein 2U5 (203 aa).

Topologically, residues 1–31 (MSEHRIPVAADKQISPPISAGEQKGCKGLKR) are cytoplasmic. The chain crosses the membrane as a helical span at residues 32 to 52 (TDLMLRFAAFVCCAVTMVVLI). The Extracellular portion of the chain corresponds to 53 to 84 (TDKQTSAIQVPGFNNLTITKTVSFDLAKAFVY). N67 carries an N-linked (GlcNAc...) asparagine glycan. The helical transmembrane segment at 85–105 (LVSAAGIGAGYTLLVLVLSII) threads the bilayer. Residues 106-111 (SAERSK) are Cytoplasmic-facing. A helical membrane pass occupies residues 112 to 132 (AIAWFIFVFDQLITYVLLAAA). The Extracellular segment spans residues 133–164 (AASTEVAYMGAHAPPEASWLKVCSLFGRFCHQ). A helical transmembrane segment spans residues 165 to 185 (LGASLVTSFISTVLFAFSAAI). Residues 186–203 (SAYYLFSNTNVRPAYSKG) are Cytoplasmic-facing.

It belongs to the Casparian strip membrane proteins (CASP) family. Homodimer and heterodimers.

It is found in the cell membrane. The protein is CASP-like protein 2U5 of Selaginella moellendorffii (Spikemoss).